The following is a 207-amino-acid chain: LexA repressor (207 aa).

Positions 28 to 48 (RAEISRELGFKSANAAEEHLK) form a DNA-binding region, H-T-H motif. Active-site for autocatalytic cleavage activity residues include Ser123 and Lys160.

The protein belongs to the peptidase S24 family. Homodimer.

The catalysed reaction is Hydrolysis of Ala-|-Gly bond in repressor LexA.. In terms of biological role, represses a number of genes involved in the response to DNA damage (SOS response), including recA and lexA. In the presence of single-stranded DNA, RecA interacts with LexA causing an autocatalytic cleavage which disrupts the DNA-binding part of LexA, leading to derepression of the SOS regulon and eventually DNA repair. The polypeptide is LexA repressor (Haemophilus influenzae (strain ATCC 51907 / DSM 11121 / KW20 / Rd)).